The primary structure comprises 537 residues: Hexahomomethionine N-hydroxylase (537 aa).

Residues F7 to L27 form a helical membrane-spanning segment.

Belongs to the cytochrome P450 family. Heme serves as cofactor. In terms of tissue distribution, highly expressed in hypocotyl and roots. Lower expression in siliques, stems and leaves. Barely detectable in flowers. Expressed only in the vascular bundles in apical plant parts.

The protein resides in the endoplasmic reticulum membrane. It carries out the reaction L-hexahomomethionine + 2 reduced [NADPH--hemoprotein reductase] + 2 O2 = (E)-9-(methylsulfanyl)nonanal oxime + 2 oxidized [NADPH--hemoprotein reductase] + CO2 + 3 H2O + 2 H(+). The catalysed reaction is L-pentahomomethionine + 2 reduced [NADPH--hemoprotein reductase] + 2 O2 = (E)-8-(methylsulfanyl)octanal oxime + 2 oxidized [NADPH--hemoprotein reductase] + CO2 + 3 H2O + 2 H(+). The enzyme catalyses an L-polyhomomethionine + 2 reduced [NADPH--hemoprotein reductase] + 2 O2 = an (E)-omega-(methylsulfanyl)-alkanal oxime + 2 oxidized [NADPH--hemoprotein reductase] + CO2 + 3 H2O + 2 H(+). In terms of biological role, catalyzes the conversion of the long chain elongated methionines penta- and hexahomomethionine to their corresponding aldoximes 8-methylthiooctanaldoxime and 9-methylthiononanaldoxime. The chain is Hexahomomethionine N-hydroxylase (CYP79F2) from Arabidopsis thaliana (Mouse-ear cress).